Here is a 130-residue protein sequence, read N- to C-terminus: Small ribosomal subunit protein uS9 (130 aa).

The interval Thr-105–Arg-130 is disordered. The span at Lys-111 to Arg-130 shows a compositional bias: basic residues.

The protein belongs to the universal ribosomal protein uS9 family.

The polypeptide is Small ribosomal subunit protein uS9 (Lactiplantibacillus plantarum (strain ATCC BAA-793 / NCIMB 8826 / WCFS1) (Lactobacillus plantarum)).